A 296-amino-acid chain; its full sequence is Glycerol-3-phosphate dehydrogenase [NAD(P)+] (296 aa).

NADPH contacts are provided by tryptophan 12, arginine 31, and lysine 80. Residues lysine 80, glycine 108, and serine 110 each coordinate sn-glycerol 3-phosphate. Alanine 112 provides a ligand contact to NADPH. Sn-glycerol 3-phosphate contacts are provided by lysine 162, aspartate 215, serine 225, arginine 226, and asparagine 227. The active-site Proton acceptor is lysine 162. Arginine 226 lines the NADPH pocket. NADPH contacts are provided by valine 250 and glutamate 252.

This sequence belongs to the NAD-dependent glycerol-3-phosphate dehydrogenase family.

The protein resides in the cytoplasm. It carries out the reaction sn-glycerol 3-phosphate + NAD(+) = dihydroxyacetone phosphate + NADH + H(+). It catalyses the reaction sn-glycerol 3-phosphate + NADP(+) = dihydroxyacetone phosphate + NADPH + H(+). It participates in membrane lipid metabolism; glycerophospholipid metabolism. In terms of biological role, catalyzes the reduction of the glycolytic intermediate dihydroxyacetone phosphate (DHAP) to sn-glycerol 3-phosphate (G3P), the key precursor for phospholipid synthesis. In Sulfurimonas denitrificans (strain ATCC 33889 / DSM 1251) (Thiomicrospira denitrificans (strain ATCC 33889 / DSM 1251)), this protein is Glycerol-3-phosphate dehydrogenase [NAD(P)+].